We begin with the raw amino-acid sequence, 458 residues long: Sulfite exporter TauE/SafE family protein 2 (458 aa).

12 helical membrane-spanning segments follow: residues phenylalanine 5–proline 25, isoleucine 53–serine 73, serine 74–leucine 94, serine 101–valine 121, glycine 128–valine 148, isoleucine 150–phenylalanine 170, phenylalanine 227–leucine 247, tyrosine 267–phenylalanine 287, valine 324–isoleucine 344, leucine 348–phenylalanine 368, glycine 386–valine 406, and isoleucine 418–glycine 438.

The protein belongs to the 4-toluene sulfonate uptake permease (TSUP) (TC 2.A.102) family.

The protein resides in the membrane. This chain is Sulfite exporter TauE/SafE family protein 2, found in Arabidopsis thaliana (Mouse-ear cress).